The primary structure comprises 98 residues: Protein Frey 1 (98 aa).

A helical membrane pass occupies residues 13 to 29; it reads AGLSLFLHLILAVALLR. A disordered region spans residues 60-87; sequence YGILPKHPRPRGPRPLLSRAQQRKRDGP.

Interacts with SPPL2C (via active sites); the interaction stabilizes FREY1 protein and inhibits SPPL2C proteolytic activity. Interacts with IZUMO1; the interaction retains IZUMO1 at the endoplasmic reticulum membrane and coordinates IZUMO1 complex assembly.

It localises to the endoplasmic reticulum membrane. Its function is as follows. Key regulator for male fertility expressed transiently in round spermatids where it recruits IZUMO1 at the endoplasmic reticulum (ER) membrane and coordinates the oolemmal binding multimeric complex (IZUMO1 complex) assembly. Upon complete assembly of the IZUMO1 complex, its ER retention is released, facilitating IZUMO1 complex export to the acrosome. Through the interaction with SPPL2C, inhibits its intramembrane protease activity directly accessing the catalytic center of an I-CLiP. The protein is Protein Frey 1 of Homo sapiens (Human).